We begin with the raw amino-acid sequence, 250 residues long: Putative ankyrin repeat protein RBE_0623 (250 aa).

ANK repeat units follow at residues 70-99 (IGDS…EPNT), 104-134 (NCYT…NINE), and 137-166 (GKET…PDKF).

This chain is Putative ankyrin repeat protein RBE_0623, found in Rickettsia bellii (strain RML369-C).